The following is a 493-amino-acid chain: Probable cytochrome P450 313a2 (493 aa).

Cysteine 438 contacts heme.

The protein belongs to the cytochrome P450 family. Requires heme as cofactor.

It localises to the endoplasmic reticulum membrane. The protein resides in the microsome membrane. In terms of biological role, may be involved in the metabolism of insect hormones and in the breakdown of synthetic insecticides. The sequence is that of Probable cytochrome P450 313a2 (Cyp313a2) from Drosophila melanogaster (Fruit fly).